The chain runs to 256 residues: NH(3)-dependent NAD(+) synthetase (256 aa).

29-36 (GISGGIDS) serves as a coordination point for ATP. Asp35 contributes to the Mg(2+) binding site. A deamido-NAD(+)-binding site is contributed by Arg115. Thr135 provides a ligand contact to ATP. Mg(2+) is bound at residue Glu140. Deamido-NAD(+) contacts are provided by Lys148 and Asp155. ATP is bound by residues Lys164 and Ser186. Residue 245–246 (HK) participates in deamido-NAD(+) binding.

The protein belongs to the NAD synthetase family. Homodimer.

It carries out the reaction deamido-NAD(+) + NH4(+) + ATP = AMP + diphosphate + NAD(+) + H(+). The protein operates within cofactor biosynthesis; NAD(+) biosynthesis; NAD(+) from deamido-NAD(+) (ammonia route): step 1/1. Catalyzes the ATP-dependent amidation of deamido-NAD to form NAD. Uses ammonia as a nitrogen source. The chain is NH(3)-dependent NAD(+) synthetase from Methanosarcina mazei (strain ATCC BAA-159 / DSM 3647 / Goe1 / Go1 / JCM 11833 / OCM 88) (Methanosarcina frisia).